Reading from the N-terminus, the 199-residue chain is Chaperone protein TorD (199 aa).

Belongs to the TorD/DmsD family. TorD subfamily.

It is found in the cytoplasm. Involved in the biogenesis of TorA. Acts on TorA before the insertion of the molybdenum cofactor and, as a result, probably favors a conformation of the apoenzyme that is competent for acquiring the cofactor. This chain is Chaperone protein TorD, found in Shigella dysenteriae serotype 1 (strain Sd197).